Here is a 543-residue protein sequence, read N- to C-terminus: CTP synthase (543 aa).

Residues 1-267 (MKQTKYIFVT…LSPIAEILDL (267 aa)) are amidoligase domain. Ser15 contributes to the CTP binding site. Ser15 is a UTP binding site. ATP contacts are provided by residues 16 to 21 (SLGKGI) and Asp73. Asp73 and Glu141 together coordinate Mg(2+). Residues 148–150 (DIE), 188–193 (KTKPTQ), and Lys224 contribute to the CTP site. Residues 188–193 (KTKPTQ) and Lys224 contribute to the UTP site. The Glutamine amidotransferase type-1 domain maps to 292-543 (KIAFVGKYVD…IKAAINYEDN (252 aa)). Gly354 lines the L-glutamine pocket. Cys381 acts as the Nucleophile; for glutamine hydrolysis in catalysis. Residues 382–385 (LGMQ), Glu405, and Arg473 each bind L-glutamine. Catalysis depends on residues His516 and Glu518.

This sequence belongs to the CTP synthase family. As to quaternary structure, homotetramer.

The enzyme catalyses UTP + L-glutamine + ATP + H2O = CTP + L-glutamate + ADP + phosphate + 2 H(+). It catalyses the reaction L-glutamine + H2O = L-glutamate + NH4(+). The catalysed reaction is UTP + NH4(+) + ATP = CTP + ADP + phosphate + 2 H(+). It participates in pyrimidine metabolism; CTP biosynthesis via de novo pathway; CTP from UDP: step 2/2. Its activity is regulated as follows. Allosterically activated by GTP, when glutamine is the substrate; GTP has no effect on the reaction when ammonia is the substrate. The allosteric effector GTP functions by stabilizing the protein conformation that binds the tetrahedral intermediate(s) formed during glutamine hydrolysis. Inhibited by the product CTP, via allosteric rather than competitive inhibition. Its function is as follows. Catalyzes the ATP-dependent amination of UTP to CTP with either L-glutamine or ammonia as the source of nitrogen. Regulates intracellular CTP levels through interactions with the four ribonucleotide triphosphates. This chain is CTP synthase, found in Campylobacter jejuni subsp. jejuni serotype O:2 (strain ATCC 700819 / NCTC 11168).